The primary structure comprises 157 residues: MRIGHGYDVHRFAEGDFITLGGVRIAHHFGLLAHSDGDVLLHALSDALLGAAALGDIGKHFPDTDPQFKGADSRVLLRHVVALIHAKGWKIGNVDNTIVAQAPKMAPHIETMRALIAEDLQVELDQVNVKATTTEKLGFVGREEGIAVHSVALLQRP.

A divalent metal cation contacts are provided by D8 and H10. 4-CDP-2-C-methyl-D-erythritol 2-phosphate is bound by residues 8–10 (DVH) and 34–35 (HS). Position 42 (H42) interacts with a divalent metal cation. 4-CDP-2-C-methyl-D-erythritol 2-phosphate contacts are provided by residues 56–58 (DIG), 61–65 (FPDTD), 100–106 (AQAPKMA), 132–135 (TTTE), F139, and R142.

This sequence belongs to the IspF family. In terms of assembly, homotrimer. Requires a divalent metal cation as cofactor.

The catalysed reaction is 4-CDP-2-C-methyl-D-erythritol 2-phosphate = 2-C-methyl-D-erythritol 2,4-cyclic diphosphate + CMP. It participates in isoprenoid biosynthesis; isopentenyl diphosphate biosynthesis via DXP pathway; isopentenyl diphosphate from 1-deoxy-D-xylulose 5-phosphate: step 4/6. Its function is as follows. Involved in the biosynthesis of isopentenyl diphosphate (IPP) and dimethylallyl diphosphate (DMAPP), two major building blocks of isoprenoid compounds. Catalyzes the conversion of 4-diphosphocytidyl-2-C-methyl-D-erythritol 2-phosphate (CDP-ME2P) to 2-C-methyl-D-erythritol 2,4-cyclodiphosphate (ME-CPP) with a corresponding release of cytidine 5-monophosphate (CMP). This is 2-C-methyl-D-erythritol 2,4-cyclodiphosphate synthase from Pseudomonas fluorescens (strain ATCC BAA-477 / NRRL B-23932 / Pf-5).